A 191-amino-acid chain; its full sequence is 7-methyl-GTP pyrophosphatase (191 aa).

Asp-70 (proton acceptor) is an active-site residue.

Belongs to the Maf family. YceF subfamily. A divalent metal cation serves as cofactor.

Its subcellular location is the cytoplasm. It carries out the reaction N(7)-methyl-GTP + H2O = N(7)-methyl-GMP + diphosphate + H(+). In terms of biological role, nucleoside triphosphate pyrophosphatase that hydrolyzes 7-methyl-GTP (m(7)GTP). May have a dual role in cell division arrest and in preventing the incorporation of modified nucleotides into cellular nucleic acids. This chain is 7-methyl-GTP pyrophosphatase, found in Xanthomonas oryzae pv. oryzae (strain KACC10331 / KXO85).